A 215-amino-acid chain; its full sequence is Cytochrome b6 (215 aa).

Residues 32–52 form a helical membrane-spanning segment; it reads IFYCLGGITLTCFLVQVATGF. Cys-35 lines the heme c pocket. Heme b contacts are provided by His-86 and His-100. 3 consecutive transmembrane segments (helical) span residues 90–110, 116–136, and 186–206; these read ASMMVLMMILHVFRVYLTGGF, LTWVTGVVLAVLTASFGVTGY, and LHTFVLPLLTAVFMLMHFLMI. Heme b contacts are provided by His-187 and His-202.

This sequence belongs to the cytochrome b family. PetB subfamily. In terms of assembly, the 4 large subunits of the cytochrome b6-f complex are cytochrome b6, subunit IV (17 kDa polypeptide, PetD), cytochrome f and the Rieske protein, while the 4 small subunits are PetG, PetL, PetM and PetN. The complex functions as a dimer. The cofactor is heme b. It depends on heme c as a cofactor.

The protein localises to the plastid. Its subcellular location is the chloroplast thylakoid membrane. In terms of biological role, component of the cytochrome b6-f complex, which mediates electron transfer between photosystem II (PSII) and photosystem I (PSI), cyclic electron flow around PSI, and state transitions. This chain is Cytochrome b6, found in Morus indica (Mulberry).